A 1609-amino-acid polypeptide reads, in one-letter code: Laminin subunit gamma-1 (1609 aa).

The N-terminal stretch at 1–33 (MRGSHRAAPALRPRGRLWPVLAVLAAAAAAGCA) is a signal peptide. Residues 46-285 (RPQRCMPEFV…AISDFAVGGR (240 aa)) form the Laminin N-terminal domain. 2 N-linked (GlcNAc...) asparagine glycosylation sites follow: Asn-60 and Asn-134. 16 disulfide bridges follow: Cys-286–Cys-295, Cys-288–Cys-305, Cys-307–Cys-316, Cys-319–Cys-339, Cys-342–Cys-351, Cys-344–Cys-367, Cys-370–Cys-379, Cys-382–Cys-395, Cys-398–Cys-410, Cys-400–Cys-416, Cys-418–Cys-427, Cys-430–Cys-442, Cys-445–Cys-456, Cys-447–Cys-463, Cys-465–Cys-474, and Cys-477–Cys-492. Laminin EGF-like domains lie at 286–341 (CKCN…ECLP), 342–397 (CDCN…ACSS), 398–444 (CHCS…GCRP), and 445–494 (CSCD…GCTP). The Laminin EGF-like 5; first part domain maps to 495–504 (CFCFGHSSVC). The Laminin IV type A domain maps to 514 to 689 (SISSTFQIDE…PGVPATWVES (176 aa)). Asn-576 and Asn-650 each carry an N-linked (GlcNAc...) asparagine glycan. A Laminin EGF-like 5; second part domain is found at 690-723 (CTCPVGYGGQFCEMCLSGYRRETPNLGPYSPCVL). Intrachain disulfides connect Cys-724–Cys-733, Cys-726–Cys-740, Cys-742–Cys-751, Cys-754–Cys-770, Cys-773–Cys-781, Cys-775–Cys-792, Cys-795–Cys-804, Cys-807–Cys-825, Cys-828–Cys-842, Cys-830–Cys-849, Cys-852–Cys-861, Cys-864–Cys-881, Cys-884–Cys-898, Cys-886–Cys-905, Cys-907–Cys-916, Cys-919–Cys-932, Cys-935–Cys-947, Cys-937–Cys-954, Cys-956–Cys-965, Cys-968–Cys-980, Cys-983–Cys-995, Cys-985–Cys-1001, Cys-1003–Cys-1012, and Cys-1015–Cys-1028. Laminin EGF-like domains follow at residues 724–772 (CACN…DCQP), 773–827 (CPCP…LCRL), 828–883 (CQCS…KCKA), 884–934 (CNCN…GCER), 935–982 (CDCH…GCKP), and 983–1030 (CDCH…GCQE). N-linked (GlcNAc...) asparagine glycosylation is found at Asn-1022 and Asn-1107. The domain II and I stretch occupies residues 1030–1609 (ECPACYRLVK…CFNTPSIEKP (580 aa)). Residues 1038-1609 (VKDKVADHRV…CFNTPSIEKP (572 aa)) are a coiled coil. Position 1149 is a phosphoserine; by FAM20C (Ser-1149). Asn-1161, Asn-1175, Asn-1205, Asn-1223, Asn-1241, Asn-1380, Asn-1395, and Asn-1439 each carry an N-linked (GlcNAc...) asparagine glycan. Ser-1493 carries the post-translational modification Phosphoserine.

In terms of assembly, laminin is a complex glycoprotein, consisting of three different polypeptide chains (alpha, beta, gamma), which are bound to each other by disulfide bonds into a cross-shaped molecule comprising one long and three short arms with globules at each end. Gamma-1 is a subunit of laminin-1 (laminin-111 or EHS laminin), laminin-2 (laminin-211 or merosin), laminin-3 (laminin-121 or S-laminin), laminin-4 (laminin-221 or S-merosin), laminin-6 (laminin-311 or K-laminin), laminin-7 (laminin-321 or KS-laminin), laminin-8 (laminin-411), laminin-9 (laminin-421), laminin-10 (laminin-511) and laminin-11 (laminin-521). Interacts with SVEP1. As to expression, found in the basement membranes (major component).

The protein resides in the secreted. It localises to the extracellular space. Its subcellular location is the extracellular matrix. The protein localises to the basement membrane. Functionally, binding to cells via a high affinity receptor, laminin is thought to mediate the attachment, migration and organization of cells into tissues during embryonic development by interacting with other extracellular matrix components. The protein is Laminin subunit gamma-1 of Homo sapiens (Human).